Consider the following 159-residue polypeptide: Small ribosomal subunit protein uS9 (159 aa).

Belongs to the universal ribosomal protein uS9 family.

The sequence is that of Small ribosomal subunit protein uS9 from Rickettsia conorii (strain ATCC VR-613 / Malish 7).